The following is a 188-amino-acid chain: Aspartic protease inhibitor 11 (188 aa).

N-linked (GlcNAc...) asparagine glycosylation is present at N19. Cystine bridges form between C48–C93, C142–C159, and C150–C153.

It belongs to the protease inhibitor I3 (leguminous Kunitz-type inhibitor) family.

Its subcellular location is the vacuole. Functionally, inhibitor of cathepsin D (aspartic protease) and trypsin (serine protease). May protect the plant by inhibiting proteases of invading organisms. This chain is Aspartic protease inhibitor 11, found in Solanum tuberosum (Potato).